Reading from the N-terminus, the 87-residue chain is Phosphoribosyl-ATP pyrophosphatase (87 aa).

This sequence belongs to the PRA-PH family.

It localises to the cytoplasm. The catalysed reaction is 1-(5-phospho-beta-D-ribosyl)-ATP + H2O = 1-(5-phospho-beta-D-ribosyl)-5'-AMP + diphosphate + H(+). Its pathway is amino-acid biosynthesis; L-histidine biosynthesis; L-histidine from 5-phospho-alpha-D-ribose 1-diphosphate: step 2/9. This Leifsonia xyli subsp. xyli (strain CTCB07) protein is Phosphoribosyl-ATP pyrophosphatase.